The sequence spans 426 residues: Glutamate-1-semialdehyde 2,1-aminomutase (426 aa).

N6-(pyridoxal phosphate)lysine is present on lysine 268.

The protein belongs to the class-III pyridoxal-phosphate-dependent aminotransferase family. HemL subfamily. Requires pyridoxal 5'-phosphate as cofactor.

Its subcellular location is the cytoplasm. The enzyme catalyses (S)-4-amino-5-oxopentanoate = 5-aminolevulinate. It functions in the pathway porphyrin-containing compound metabolism; protoporphyrin-IX biosynthesis; 5-aminolevulinate from L-glutamyl-tRNA(Glu): step 2/2. The protein is Glutamate-1-semialdehyde 2,1-aminomutase of Saccharolobus islandicus (strain Y.N.15.51 / Yellowstone #2) (Sulfolobus islandicus).